Reading from the N-terminus, the 367-residue chain is Inactive serine protease 39 (367 aa).

Positions 1–31 (MWGSRAQQSGPDRGGACLLAAFLLCFSLLHA) are cleaved as a signal peptide. The 245-residue stretch at 68 to 312 (IYGGQIAKAE…FSDWIKQKKA (245 aa)) folds into the Peptidase S1 domain. 4 cysteine pairs are disulfide-bonded: Cys93/Cys109, Cys192/Cys269, Cys225/Cys248, and Cys259/Cys287.

This sequence belongs to the peptidase S1 family. In terms of tissue distribution, expressed in testis. More specifically, abundantly expressed in the haploid round spermatid.

It is found in the cytoplasmic vesicle. Its subcellular location is the secretory vesicle. The protein resides in the acrosome. It localises to the secreted. In terms of biological role, may play an important role in the sperm/egg interaction; released during the acrosome reaction. This is Inactive serine protease 39 (Prss39) from Mus musculus (Mouse).